The sequence spans 357 residues: MAARIQQSPQPGGGKRKGKAQYVQAKRARRWDGGGPRQLEPGIQGILITCNMNERKCVEEAYSLLNEYGDDMYGPEKFADKDQQPSGSEGEDDDVEAALKKEVGDIKASTEMRLRRFQSVESGANNVVFIRTLGIEPEKLVHHILQDIYKTKKKKTRVILRMLPISGTCKAFLEDMKKYAETFLEPWFKAPNKGTFQIVYKSRNNSHMNREEVIKELAGIVGSLNSENKVDLSNPQYTVVVEIIKAVCCLSVVKDYMLFRKYNLQEVVKSAKDLSQLNPKQAAQTGNGKEAKLESGDKSSQNDPAEGKNNQQVVPENSEELGPTESISETHVVNEGVAKPELASQVTEGSESNENDL.

Residues 1 to 10 (MAARIQQSPQ) are compositionally biased toward polar residues. 2 disordered regions span residues 1–38 (MAAR…GPRQ) and 74–95 (GPEK…DDDV). At Ala2 the chain carries N-acetylalanine. Residues Ser8, Ser86, Ser88, and Ser119 each carry the phosphoserine modification. The THUMP domain occupies 147–254 (DIYKTKKKKT…KAVCCLSVVK (108 aa)). Ser270 carries the post-translational modification Phosphoserine. Polar residues-rich tracts occupy residues 276-287 (QLNPKQAAQTGN) and 298-315 (KSSQ…QVVP). The disordered stretch occupies residues 276–357 (QLNPKQAAQT…EGSESNENDL (82 aa)).

This sequence belongs to the THUMPD1 family. In terms of assembly, interacts with NAT10. Binds tRNA.

Functionally, functions as a tRNA-binding adapter to mediate NAT10-dependent tRNA acetylation modifying cytidine to N4-acetylcytidine (ac4C). This chain is THUMP domain-containing protein 1 (THUMPD1), found in Bos taurus (Bovine).